The chain runs to 469 residues: MAFPAGFGWAAATAAYQVEGGWDADGKGPCVWDTFTHQGGERVFKNQTGDVACGSYTLWEEDLKCIKQLGLTHYRFSLSWSRLLPDGTTGFINQKGIDYYNKIIDDLLKNGVTPIVTLYHFDLPQTLEDQGGWLSEAIIESFDKYAQFCFSTFGDRVKQWITINEANVLSVMSYDLGMFPPGIPHFGTGGYQAAHNLIKAHARSWHSYDSLFRKKQKGMVSLSLFAVWLEPADPNSVSDQEAAKRAITFHLDLFAKPIFIDGDYPEVVKSQIASMSQKQGYPSSRLPEFTEEEKKMIKGTADFFAVQYYTTRLIKYQENKKGELGILQDAEIEFFPDPSWKNVDWIYVVPWGVCKLLKYIKDTYNNPVIYITENGFPQSDPAPLDDTQRWEYFRQTFQELFKAIQLDKVNLQVYCAWSLLDNFEWNQGYSSRFGLFHVDFEDPARPRVPYTSAKEYAKIIRNNGLEAHL.

Substrate is bound by residues Gln17, His120, and Asn164. The active-site Proton donor is the Glu165. A substrate-binding site is contributed by Tyr309. Residue Glu373 is the Nucleophile of the active site. Substrate-binding positions include Trp417 and 424–425 (EW).

Belongs to the glycosyl hydrolase 1 family. Klotho subfamily. In terms of assembly, may interact with NEU2. The N-terminus is blocked. Present in small intestine (at protein level). Expressed in liver, small intestine, colon, spleen and kidney. Down-regulated in renal cell carcinomas and hepatocellular carcinomas.

It is found in the cytoplasm. It localises to the cytosol. The enzyme catalyses Hydrolysis of terminal, non-reducing beta-D-glucosyl residues with release of beta-D-glucose.. It carries out the reaction a beta-D-glucosyl-(1&lt;-&gt;1')-N-acylsphing-4-enine + H2O = an N-acylsphing-4-enine + D-glucose. It catalyses the reaction a beta-D-galactosyl-(1&lt;-&gt;1')-N-acylsphing-4-enine + H2O = an N-acylsphing-4-enine + D-galactose. The catalysed reaction is beta-D-glucosyl-(1&lt;-&gt;1)-sphing-4-enine + H2O = sphing-4-enine + D-glucose. The enzyme catalyses beta-D-glucosyl-(1&lt;-&gt;1)-N-octadecanoylsphing-4-enine + H2O = N-octadecanoylsphing-4-enine + D-glucose. It carries out the reaction beta-D-galactosyl-(1&lt;-&gt;1)-sphing-4-enine + H2O = sphing-4-enine + D-galactose. It catalyses the reaction beta-D-galactosyl-(1&lt;-&gt;1')-N-octadecanoylsphing-4-enine + H2O = N-octadecanoylsphing-4-enine + D-galactose. The catalysed reaction is a beta-D-xylosyl-(1&lt;-&gt;1')-N-acylsphing-4-enine + cholesterol = cholesteryl 3-beta-D-xyloside + an N-acylsphing-4-enine. Its activity is regulated as follows. Inhibited by 2,4-dinitrophenyl-2-fluoro-2-deoxy-beta-D-glucopyranoside. Inhibited by sodium taurocholate. Inhibited by alpha-1-C-nonyl-DIX/AnDIX. The glucosylceramidase activity is slightly inhibited by conduritol B epoxide/CBE while the galactosylceramidase activity is not. Functionally, neutral cytosolic beta-glycosidase with a broad substrate specificity that could play a role in the catabolism of glycosylceramides. Has a significant glucosylceramidase activity in vitro. However, that activity is relatively low and its significance in vivo is not clear. Hydrolyzes galactosylceramides/GalCers, glucosylsphingosines/GlcSphs and galactosylsphingosines/GalSphs. However, the in vivo relevance of these activities is unclear. It can also hydrolyze a broad variety of dietary glycosides including phytoestrogens, flavonols, flavones, flavanones and cyanogens in vitro and could therefore play a role in the metabolism of xenobiotics. Possesses transxylosylase activity in vitro using xylosylated ceramides/XylCers (such as beta-D-xylosyl-(1&lt;-&gt;1')-N-acylsphing-4-enine) as xylosyl donors and cholesterol as acceptor. Could also play a role in the catabolism of cytosolic sialyl free N-glycans. This Homo sapiens (Human) protein is Cytosolic beta-glucosidase.